Reading from the N-terminus, the 127-residue chain is Small ribosomal subunit protein uS13 (127 aa).

Residues 97–127 are disordered; that stretch reads PVRGQRTRTNARTRRGRRVTVAGKKKAPSKK. Over residues 101 to 127 the composition is skewed to basic residues; it reads QRTRTNARTRRGRRVTVAGKKKAPSKK.

Belongs to the universal ribosomal protein uS13 family. Part of the 30S ribosomal subunit. Forms a loose heterodimer with protein S19. Forms two bridges to the 50S subunit in the 70S ribosome.

Functionally, located at the top of the head of the 30S subunit, it contacts several helices of the 16S rRNA. In the 70S ribosome it contacts the 23S rRNA (bridge B1a) and protein L5 of the 50S subunit (bridge B1b), connecting the 2 subunits; these bridges are implicated in subunit movement. Contacts the tRNAs in the A and P-sites. This chain is Small ribosomal subunit protein uS13, found in Microcystis aeruginosa (strain NIES-843 / IAM M-2473).